We begin with the raw amino-acid sequence, 500 residues long: 4-aminobutyrate aminotransferase, mitochondrial (500 aa).

Residues 1–28 (MASMLLAQRLACSFQHSYRLLVPGSRHI) constitute a mitochondrion transit peptide. Residue cysteine 163 participates in [2Fe-2S] cluster binding. A pyridoxal 5'-phosphate-binding site is contributed by 164 to 165 (GS). A [2Fe-2S] cluster-binding site is contributed by cysteine 166. Arginine 220 is a binding site for substrate. The residue at position 231 (lysine 231) is an N6-succinyllysine. Lysine 252 is subject to N6-acetyllysine; alternate. Lysine 252 is subject to N6-succinyllysine; alternate. An N6-acetyllysine mark is found at lysine 279 and lysine 318. Position 357 is an N6-(pyridoxal phosphate)lysine (lysine 357). Threonine 381 is a pyridoxal 5'-phosphate binding site. Lysine 413 is modified (N6-acetyllysine; alternate). Lysine 413 is subject to N6-succinyllysine; alternate. Residues lysine 452 and lysine 470 each carry the N6-acetyllysine modification.

Belongs to the class-III pyridoxal-phosphate-dependent aminotransferase family. Homodimer; disulfide-linked. It depends on pyridoxal 5'-phosphate as a cofactor. The cofactor is [2Fe-2S] cluster. In terms of tissue distribution, liver &gt; pancreas &gt; brain &gt; kidney &gt; heart &gt; placenta.

It localises to the mitochondrion matrix. It carries out the reaction 4-aminobutanoate + 2-oxoglutarate = succinate semialdehyde + L-glutamate. The catalysed reaction is (S)-3-amino-2-methylpropanoate + 2-oxoglutarate = 2-methyl-3-oxopropanoate + L-glutamate. In terms of biological role, catalyzes the conversion of gamma-aminobutyrate and L-beta-aminoisobutyrate to succinate semialdehyde and methylmalonate semialdehyde, respectively. Can also convert delta-aminovalerate and beta-alanine. The polypeptide is 4-aminobutyrate aminotransferase, mitochondrial (Homo sapiens (Human)).